The chain runs to 250 residues: Putative beta-carotene-binding protein (250 aa).

Deposited in the epidermis and cuticle of male locusts during their sexual maturation.

Functionally, has beta-carotene-binding activity. May be involved in the transport of carotenes from internal tissues to epidermis and cuticle of the locust. The polypeptide is Putative beta-carotene-binding protein (Schistocerca gregaria (Desert locust)).